The chain runs to 199 residues: N-(5'-phosphoribosyl)anthranilate isomerase (199 aa).

The protein belongs to the TrpF family.

The catalysed reaction is N-(5-phospho-beta-D-ribosyl)anthranilate = 1-(2-carboxyphenylamino)-1-deoxy-D-ribulose 5-phosphate. It functions in the pathway amino-acid biosynthesis; L-tryptophan biosynthesis; L-tryptophan from chorismate: step 3/5. The polypeptide is N-(5'-phosphoribosyl)anthranilate isomerase (Clostridium kluyveri (strain NBRC 12016)).